A 476-amino-acid polypeptide reads, in one-letter code: Ribulose bisphosphate carboxylase large chain (476 aa).

Residues M1–S2 constitute a propeptide that is removed on maturation. P3 bears the N-acetylproline mark. Position 14 is an N6,N6,N6-trimethyllysine (K14). Substrate contacts are provided by N123 and T173. K175 acts as the Proton acceptor in catalysis. K177 is a substrate binding site. Mg(2+) is bound by residues K201, D203, and E204. K201 is modified (N6-carboxylysine). The active-site Proton acceptor is H294. The substrate site is built by R295, H327, and S379.

It belongs to the RuBisCO large chain family. Type I subfamily. In terms of assembly, heterohexadecamer of 8 large chains and 8 small chains; disulfide-linked. The disulfide link is formed within the large subunit homodimers. Mg(2+) is required as a cofactor. Post-translationally, the disulfide bond which can form in the large chain dimeric partners within the hexadecamer appears to be associated with oxidative stress and protein turnover.

It is found in the plastid. The protein localises to the chloroplast. It catalyses the reaction 2 (2R)-3-phosphoglycerate + 2 H(+) = D-ribulose 1,5-bisphosphate + CO2 + H2O. It carries out the reaction D-ribulose 1,5-bisphosphate + O2 = 2-phosphoglycolate + (2R)-3-phosphoglycerate + 2 H(+). Its function is as follows. RuBisCO catalyzes two reactions: the carboxylation of D-ribulose 1,5-bisphosphate, the primary event in carbon dioxide fixation, as well as the oxidative fragmentation of the pentose substrate in the photorespiration process. Both reactions occur simultaneously and in competition at the same active site. This Sorghum bicolor (Sorghum) protein is Ribulose bisphosphate carboxylase large chain.